Reading from the N-terminus, the 389-residue chain is Alpha-2B adrenergic receptor (389 aa).

Residues 1 to 25 form a helical membrane-spanning segment; the sequence is AIAAVITFLILFTIFGNALVILAVL. The Cytoplasmic portion of the chain corresponds to 26-36; the sequence is TSRSLRAPQNL. A helical transmembrane segment spans residues 37 to 62; it reads FLVSLAAADILVATLIIPFSLANELL. At 63-72 the chain is on the extracellular side; it reads GYWYFRRTWC. A disulfide bridge connects residues cysteine 72 and cysteine 151. A helical membrane pass occupies residues 73 to 95; it reads EVYLALDVLFCTSSIVHLCAISL. The Cytoplasmic portion of the chain corresponds to 96 to 117; the sequence is DRYWAVTRALEYNTKRTPRRIK. A helical transmembrane segment spans residues 118-140; the sequence is CIILTVWLIAAVISLPPLIYKGD. The Extracellular portion of the chain corresponds to 141 to 156; sequence QGPQPRGRPQCKLNQE. The chain crosses the membrane as a helical span at residues 157–180; that stretch reads AWYILASSIGSFFAPCLIMILVYL. Over 181 to 363 the chain is Cytoplasmic; sequence RIYLIAKRSH…LTREKRFTFV (183 aa). 2 disordered regions span residues 194 to 216 and 233 to 320; these read PRAK…AGAS and EANG…PLQQ. Positions 196-205 are enriched in gly residues; that stretch reads AKGGPGGGGS. Residues 255–267 are compositionally biased toward low complexity; that stretch reads PALPSSWPALPSS. Acidic residues predominate over residues 280 to 302; sequence LEEEAEEEEEEEEEEEEGEEECE. Residues 303 to 320 are compositionally biased toward low complexity; that stretch reads PQALPASPASACSPPLQQ. Residues 364–387 traverse the membrane as a helical segment; that stretch reads LAVVIGVFVLCWFPFFFSYSLGAI. At 388–389 the chain is on the extracellular side; that stretch reads CP.

The protein belongs to the G-protein coupled receptor 1 family. Adrenergic receptor subfamily. ADRA2B sub-subfamily. In terms of assembly, interacts with RAB26. Interacts with PPP1R9B. Interacts with GGA1, GGA2 and GGA3.

Its subcellular location is the cell membrane. Its function is as follows. Alpha-2 adrenergic receptors mediate the catecholamine-induced inhibition of adenylate cyclase through the action of G proteins. This chain is Alpha-2B adrenergic receptor (ADRA2B), found in Equus caballus (Horse).